The chain runs to 647 residues: Frizzled-1 (647 aa).

The first 69 residues, 1–69 (MAEEEAPKKS…WLLEAPLLLG (69 aa)), serve as a signal peptide directing secretion. Residues 73–322 (QAAGQGPGQG…PEELRFSRTW (250 aa)) lie on the Extracellular side of the membrane. The tract at residues 74-104 (AAGQGPGQGPGPGQQPPPPPQQQQSGQQYNG) is disordered. The region spanning 111 to 230 (PDHGYCQPIS…HGAGELCVGQ (120 aa)) is the FZ domain. Cystine bridges form between Cys-116–Cys-177, Cys-124–Cys-170, Cys-161–Cys-198, Cys-187–Cys-227, and Cys-191–Cys-215. N-linked (GlcNAc...) asparagine glycosylation is present at Asn-130. Asn-231 carries N-linked (GlcNAc...) asparagine glycosylation. A helical membrane pass occupies residues 323–343 (IGIWSVLCCASTLFTVLTYLV). Residues 344–354 (DMRRFSYPERP) lie on the Cytoplasmic side of the membrane. A helical transmembrane segment spans residues 355 to 375 (IIFLSGCYTAVAVAYIAGFLL). Topologically, residues 376–402 (EDRVVCNDKFAEDGARTVAQGTKKEGC) are extracellular. A helical membrane pass occupies residues 403 to 423 (TILFMMLYFFSMASSIWWVIL). The Cytoplasmic segment spans residues 424-445 (SLTWFLAAGMKWGHEAIEANSQ). The chain crosses the membrane as a helical span at residues 446-466 (YFHLAAWAVPAIKTITILALG). At 467–489 (QVDGDVLSGVCFVGLNNVDALRG) the chain is on the extracellular side. A helical transmembrane segment spans residues 490 to 510 (FVLAPLFVYLFIGTSFLLAGF). At 511–536 (VSLFRIRTIMKHDGTKTEKLEKLMVR) the chain is on the cytoplasmic side. A helical transmembrane segment spans residues 537-557 (IGVFSVLYTVPATIVIACYFY). At 558 to 601 (EQAFRDQWERSWVAQSCKSYAIPCPHLQAGGGAPPHPPMSPDFT) the chain is on the extracellular side. The helical transmembrane segment at 602–622 (VFMIKYLMTLIVGITSGFWIW) threads the bilayer. At 623–647 (SGKTLNSWRKFYTRLTNSKQGETTV) the chain is on the cytoplasmic side. Residues 625–630 (KTLNSW) carry the Lys-Thr-X-X-X-Trp motif, mediates interaction with the PDZ domain of Dvl family members motif. A PDZ-binding motif is present at residues 645 to 647 (TTV).

It belongs to the G-protein coupled receptor Fz/Smo family. As to quaternary structure, interacts with MYOC. Interacts with WNT7B. (Microbial infection) Interacts with C.difficile toxin TcdB; frizzled receptors constitute the major host receptors for TcdB in the colonic epithelium. In terms of processing, ubiquitinated by ZNRF3, leading to its degradation by the proteasome. Expressed in adult heart, placenta, lung, kidney, pancreas, prostate, and ovary and in fetal lung and kidney.

Its subcellular location is the cell membrane. Functionally, receptor for Wnt proteins. Activated by WNT3A, WNT3, WNT1 and to a lesser extent WNT2, but apparently not by WNT4, WNT5A, WNT5B, WNT6, WNT7A or WNT7B. Contradictory results showing activation by WNT7B have been described for mouse. Functions in the canonical Wnt/beta-catenin signaling pathway. The canonical Wnt/beta-catenin signaling pathway leads to the activation of disheveled proteins, inhibition of GSK-3 kinase, nuclear accumulation of beta-catenin and activation of Wnt target genes. A second signaling pathway involving PKC and calcium fluxes has been seen for some family members, but it is not yet clear if it represents a distinct pathway or if it can be integrated in the canonical pathway, as PKC seems to be required for Wnt-mediated inactivation of GSK-3 kinase. Both pathways seem to involve interactions with G-proteins. May be involved in transduction and intercellular transmission of polarity information during tissue morphogenesis and/or in differentiated tissues. In terms of biological role, (Microbial infection) Acts as a receptor for C.difficile toxin TcdB in the colonic epithelium. The chain is Frizzled-1 (FZD1) from Homo sapiens (Human).